We begin with the raw amino-acid sequence, 572 residues long: MFS-type transporter pydD (572 aa).

A compositionally biased stretch (basic and acidic residues) spans 1–15 (MLQEDKSSETMHDPS). The segment at 1–46 (MLQEDKSSETMHDPSTRGVETRNVTAVDSPLETATTSESPETERTN) is disordered. N-linked (GlcNAc...) asparagine glycosylation occurs at N23. Residues 29 to 39 (SPLETATTSES) are compositionally biased toward low complexity. The next 8 helical transmembrane spans lie at 56-76 (FWALLVSISLAGLLTALEGTI), 88-108 (LGGGHLYVWVVNGYLFAMTAM), 123-143 (WPMLGATALFVLGSGICGGAT), 156-176 (GIGASGTTVLTETIICDVVPL), 185-205 (IVMGMIFLGTALGPFFAGLIV), 212-232 (WTFYLALPVGGAALVALFSFL), 255-275 (ALFVAAISSVLIGLSWAGSVY), and 282-302 (VLVPLFVGIAGMGLFMVFEGS). N317 carries N-linked (GlcNAc...) asparagine glycosylation. 6 consecutive transmembrane segments (helical) span residues 321–341 (VGVMIMTFFHGIITIWQLYFM), 358–378 (VQILATILAILPAAGIGGFLM), 386–406 (PIHYASWAVTLIGLGLFSLLD), 419–439 (IVYSMGAGMLVPTLLPALLAP), 451–471 (TWSFVRSFGMVWGTAIPAAVF), and 529–549 (WLVSLAFAGMGLLAATLAREV).

It belongs to the major facilitator superfamily.

It is found in the membrane. MFS-type transporter; part of the gene cluster that mediates the biosynthesis of pyrrocidines, fungal natural products containing a macrocyclic para-cyclophane connected to a decahydrofluorene ring system that show potent antibiotic activities toward Gram-negative bacteria. The polypeptide is MFS-type transporter pydD (Acremonium sp).